Reading from the N-terminus, the 214-residue chain is Holliday junction branch migration complex subunit RuvA (214 aa).

Positions 1 to 63 are domain I; the sequence is MISFLRGTVA…EDSLTLFGFS (63 aa). Residues 64 to 142 form a domain II region; the sequence is SDDEREVFDV…PHGTGAAAAP (79 aa). Residues 143 to 153 are flexible linker; sequence AAAASAPWKPQ. Residues 153 to 214 are domain III; sequence QVVAAMTSLG…RAGNRVGSRG (62 aa).

The protein belongs to the RuvA family. Homotetramer. Forms an RuvA(8)-RuvB(12)-Holliday junction (HJ) complex. HJ DNA is sandwiched between 2 RuvA tetramers; dsDNA enters through RuvA and exits via RuvB. An RuvB hexamer assembles on each DNA strand where it exits the tetramer. Each RuvB hexamer is contacted by two RuvA subunits (via domain III) on 2 adjacent RuvB subunits; this complex drives branch migration. In the full resolvosome a probable DNA-RuvA(4)-RuvB(12)-RuvC(2) complex forms which resolves the HJ.

It is found in the cytoplasm. In terms of biological role, the RuvA-RuvB-RuvC complex processes Holliday junction (HJ) DNA during genetic recombination and DNA repair, while the RuvA-RuvB complex plays an important role in the rescue of blocked DNA replication forks via replication fork reversal (RFR). RuvA specifically binds to HJ cruciform DNA, conferring on it an open structure. The RuvB hexamer acts as an ATP-dependent pump, pulling dsDNA into and through the RuvAB complex. HJ branch migration allows RuvC to scan DNA until it finds its consensus sequence, where it cleaves and resolves the cruciform DNA. This chain is Holliday junction branch migration complex subunit RuvA, found in Arthrobacter sp. (strain FB24).